The sequence spans 234 residues: Uridylate kinase (234 aa).

ATP is bound at residue K9–G12. G51 lines the UMP pocket. ATP-binding residues include G52 and R56. UMP-binding positions include D71 and C132–T139. ATP is bound by residues T159, Y165, and D168.

This sequence belongs to the UMP kinase family. As to quaternary structure, homohexamer.

It is found in the cytoplasm. It carries out the reaction UMP + ATP = UDP + ADP. It participates in pyrimidine metabolism; CTP biosynthesis via de novo pathway; UDP from UMP (UMPK route): step 1/1. Inhibited by UTP. Catalyzes the reversible phosphorylation of UMP to UDP. The chain is Uridylate kinase from Prochlorococcus marinus (strain MIT 9215).